Consider the following 318-residue polypeptide: tRNA dimethylallyltransferase (318 aa).

ATP is bound at residue 16 to 23 (GPTASGKT). 18–23 (TASGKT) contributes to the substrate binding site. Interaction with substrate tRNA regions lie at residues 41–44 (DSAL), 165–169 (QRINR), 246–251 (RCVGYR), and 279–286 (KRQITWLR).

The protein belongs to the IPP transferase family. In terms of assembly, monomer. Requires Mg(2+) as cofactor.

It carries out the reaction adenosine(37) in tRNA + dimethylallyl diphosphate = N(6)-dimethylallyladenosine(37) in tRNA + diphosphate. Functionally, catalyzes the transfer of a dimethylallyl group onto the adenine at position 37 in tRNAs that read codons beginning with uridine, leading to the formation of N6-(dimethylallyl)adenosine (i(6)A). This Actinobacillus succinogenes (strain ATCC 55618 / DSM 22257 / CCUG 43843 / 130Z) protein is tRNA dimethylallyltransferase.